The chain runs to 297 residues: uncharacterized protein (297 aa).

Positions 1 to 24 (MRAINKFLITVCIALLASVAVALG) are cleaved as a signal peptide. Heme is bound by residues C58, C61, H62, C141, C144, H145, C167, C170, H171, C223, C226, H227, C264, C267, and H268. Residues 277–297 (TNSVDTWSREGEGAEVQQLPH) form a disordered region.

In terms of processing, binds 5 heme groups per subunit.

This is an uncharacterized protein from Archaeoglobus fulgidus (strain ATCC 49558 / DSM 4304 / JCM 9628 / NBRC 100126 / VC-16).